Consider the following 375-residue polypeptide: Putative F-box/kelch-repeat protein At3g24610 (375 aa).

A disordered region spans residues 1-27 (MSNEAPEVEPHSKRRKKEASPSSSSGF). The region spanning 25–71 (SGFLQSLPEAVAMICLARVSRLDHAALSLVSKSCRSMVLSPELYQTR) is the F-box domain. Residues 138 to 183 (KINVWGGCKYKHYYDWGEVFDPKTQTWADMSIPKPVREEKIYVVDS) form a Kelch repeat.

The sequence is that of Putative F-box/kelch-repeat protein At3g24610 from Arabidopsis thaliana (Mouse-ear cress).